Consider the following 229-residue polypeptide: Large ribosomal subunit protein uL1 (229 aa).

This sequence belongs to the universal ribosomal protein uL1 family. In terms of assembly, part of the 50S ribosomal subunit.

Binds directly to 23S rRNA. The L1 stalk is quite mobile in the ribosome, and is involved in E site tRNA release. Its function is as follows. Protein L1 is also a translational repressor protein, it controls the translation of the L11 operon by binding to its mRNA. This is Large ribosomal subunit protein uL1 from Latilactobacillus sakei subsp. sakei (strain 23K) (Lactobacillus sakei subsp. sakei).